The chain runs to 800 residues: Protein SPT2 homolog (800 aa).

The tract at residues 1–687 (MDFHSVLRMA…PGHRPNMQPP (687 aa)) is important for interaction with DNA. A coiled-coil region spans residues 53–82 (QEIQNKEVEAKRKKEGLLAKRKELKHDRKA). Disordered regions lie at residues 70–173 (LAKR…PALN), 197–646 (KEER…MAKP), and 661–698 (VPKSINGHMNGMRSAVPPGHRPNMQPPGRPLPPITSSY). The segment covering 124–137 (TEEDEEYMTEEELY) has biased composition (acidic residues). The span at 155 to 164 (PQKVAKAAPG) shows a compositional bias: low complexity. A coiled-coil region spans residues 196-224 (KKEERLRTAEELKELEFLERKAQKADRKD). Basic and acidic residues-rich tracts occupy residues 197–226 (KEERLRTAEELKELEFLERKAQKADRKDPM) and 249–259 (HSVEKRSHENS). The span at 260–272 (KSSSTEQNGTFRK) shows a compositional bias: polar residues. Basic and acidic residues predominate over residues 273-295 (SSSDNRSREEKSGSVFHTKDSKF). Composition is skewed to low complexity over residues 328-360 (SGSTSLRPSSGGSSSVSGRPSGSSEKPGSSSGK), 367-377 (SSSARSSSGSG), 390-424 (GASGSGSARSVGESGSRSGKPTGASGSGLARSVGA), 443-501 (GVSG…SVSG), and 514-581 (GAPG…ASSS). A compositionally biased stretch (polar residues) spans 608–626 (NSVRHNTTSISVSARSSLG). A compositionally biased stretch (pro residues) spans 684-693 (MQPPGRPLPP). The interval 688 to 800 (GRPLPPITSS…LKSAKKMKSR (113 aa)) is important for interaction with histones. A coiled-coil region spans residues 756 to 800 (REQQKEEARSLRLGIQEDLEELRREEEELKQKAKQLKSAKKMKSR).

It belongs to the SPT2 family. Interacts with histones. Interacts with a heterotetrameric complex formed by histone H3 and H4, especially when the histone tetramer is not bound to DNA.

The protein resides in the nucleus. The protein localises to the nucleolus. Its function is as follows. Histone chaperone that stabilizes pre-existing histone tetramers and regulates replication-independent histone exchange on chromatin. Required for normal chromatin refolding in the coding region of transcribed genes, and for the suppression of spurious transcription. Binds DNA and histones and promotes nucleosome assembly (in vitro). Facilitates formation of tetrameric histone complexes containing histone H3 and H4. Modulates RNA polymerase 1-mediated transcription. Binds DNA, with a preference for branched DNA species, such as Y-form DNA and Holliday junction DNA. The protein is Protein SPT2 homolog (spty2d1) of Xenopus laevis (African clawed frog).